The primary structure comprises 427 residues: MSAIVDIVGREILDSRGNPTVECDVLLESGTMGRAAVPSGASTGSREAIELRDGDKTRYLGKGVLKAVEHINTEISEAVLGLDASEQAFLDKTLIDLDGTDNKSRLGANAMLAVSMAVARAAAEESGLPLYRYFGGMGAVQMPVPMMNVVNGGAHANNSLDIQEFMIIPLGAPSFREALRYGAEVFHALKKIIHDKGMSTAVGDEGGFTPSVASHEEAIQLILQAIDSAGYTAGEQIAIGLDCAASEFYKDGKYQLGAEGLSLNAQEWTDMLATWVDKYPIISIEDGMAENDWDGWKILTDRLGQQVQIVGDDLFVTNTKIFKEGIDKGIANSILIKINQIGTLTETFACIEMAKRAGYTAVISHRSGETEDSTIADIAVGTNAGQIKTGSLSRSDRMAKYNQLLRIEEDLGEIAFYPGRAAFYNLR.

(2R)-2-phosphoglycerate is bound at residue Gln163. The active-site Proton donor is Glu205. Residues Asp242, Glu285, and Asp312 each coordinate Mg(2+). 4 residues coordinate (2R)-2-phosphoglycerate: Lys337, Arg366, Ser367, and Lys388. The active-site Proton acceptor is Lys337.

This sequence belongs to the enolase family. Mg(2+) serves as cofactor.

It localises to the cytoplasm. The protein resides in the secreted. The protein localises to the cell surface. The catalysed reaction is (2R)-2-phosphoglycerate = phosphoenolpyruvate + H2O. It functions in the pathway carbohydrate degradation; glycolysis; pyruvate from D-glyceraldehyde 3-phosphate: step 4/5. Functionally, catalyzes the reversible conversion of 2-phosphoglycerate (2-PG) into phosphoenolpyruvate (PEP). It is essential for the degradation of carbohydrates via glycolysis. The polypeptide is Enolase (Albidiferax ferrireducens (strain ATCC BAA-621 / DSM 15236 / T118) (Rhodoferax ferrireducens)).